We begin with the raw amino-acid sequence, 509 residues long: GMP synthase [glutamine-hydrolyzing] (509 aa).

In terms of domain architecture, Glutamine amidotransferase type-1 spans 4 to 194 (KVIVLDFGGQ…LYEICGLTPD (191 aa)). C81 serves as the catalytic Nucleophile. Active-site residues include H168 and E170. The GMPS ATP-PPase domain maps to 195-384 (WTMESFAQKA…LGLPESIVWR (190 aa)). 222-228 (SGGVDSS) serves as a coordination point for ATP.

Homodimer.

The enzyme catalyses XMP + L-glutamine + ATP + H2O = GMP + L-glutamate + AMP + diphosphate + 2 H(+). Its pathway is purine metabolism; GMP biosynthesis; GMP from XMP (L-Gln route): step 1/1. In terms of biological role, catalyzes the synthesis of GMP from XMP. In Carboxydothermus hydrogenoformans (strain ATCC BAA-161 / DSM 6008 / Z-2901), this protein is GMP synthase [glutamine-hydrolyzing].